Consider the following 801-residue polypeptide: Probable inorganic carbon transporter subunit DabA (801 aa).

C330, D332, H489, and C504 together coordinate Zn(2+).

It belongs to the inorganic carbon transporter (TC 9.A.2) DabA family. As to quaternary structure, forms a complex with DabB. It depends on Zn(2+) as a cofactor.

It is found in the cell inner membrane. Part of an energy-coupled inorganic carbon pump. This Jannaschia sp. (strain CCS1) protein is Probable inorganic carbon transporter subunit DabA.